The following is a 359-amino-acid chain: 3-isopropylmalate dehydrogenase (359 aa).

Gly76 to Glu89 contacts NAD(+). Substrate is bound by residues Arg96, Arg106, Arg134, and Asp225. Positions 225, 249, and 253 each coordinate Mg(2+). Gly283–Asn295 contributes to the NAD(+) binding site.

Belongs to the isocitrate and isopropylmalate dehydrogenases family. LeuB type 1 subfamily. In terms of assembly, homodimer. Requires Mg(2+) as cofactor. Mn(2+) is required as a cofactor.

Its subcellular location is the cytoplasm. It catalyses the reaction (2R,3S)-3-isopropylmalate + NAD(+) = 4-methyl-2-oxopentanoate + CO2 + NADH. It functions in the pathway amino-acid biosynthesis; L-leucine biosynthesis; L-leucine from 3-methyl-2-oxobutanoate: step 3/4. In terms of biological role, catalyzes the oxidation of 3-carboxy-2-hydroxy-4-methylpentanoate (3-isopropylmalate) to 3-carboxy-4-methyl-2-oxopentanoate. The product decarboxylates to 4-methyl-2 oxopentanoate. The polypeptide is 3-isopropylmalate dehydrogenase (Acinetobacter baylyi (strain ATCC 33305 / BD413 / ADP1)).